We begin with the raw amino-acid sequence, 618 residues long: MLLQKINSPKDLKRLSIDELKTLSAEIREIIINTVENNGGHLASNLGTVELTLALHYVFDTPEDKIIWDVGHQAYTHKLVTGRAKDFHTLRQFGGISGYIAPWESEYDHFAVGHAGTSLSAALGFAKARDLKGEKYKVIAVIGDGALTSGMALEALNQIGYLNTDLIVVLNDNEHSISPNVGAIALYLAKLRKHPLYRFFKQTTQNLLKNSSIGKGLLAFDLKLERSLKSLLLENPMFEYWGFKYFGPFDGHDIPVLISVFKGIKDNLSCPVLIHITTKKGIGHKDAEATPSKFHSIGAKIEREKKVPTYTEVFGKALVELGEKYPEIVAITAAMPEGTGLSYFAQRFPERFFDVGIAEEHAVTFAAGLAKNGLKPVVAIYSTFLQRAFDQIIHDVCLQKLPIVFVLDRAGIVSDDGPTHQGIFDLSYLRLIPNMVISAPKDESELRDLLYTAINYPGPFAIRYPKSKGVGIGLKDHFERIEIGKSEILKYGKNVLILAIGSMVYPALEAESILKTEGISPTIVNVRFLKPLDVLTLEELISSHDVIITVEENVITGGLFGAISELVNILKLNKKVLPISLPDKFIEQGNAQLLRDIYGLSGHKIAEKIISVLEDVKV.

Thiamine diphosphate contacts are provided by residues histidine 72 and 113-115; that span reads GHA. Aspartate 144 provides a ligand contact to Mg(2+). Residues 145–146, asparagine 173, histidine 284, and glutamate 359 contribute to the thiamine diphosphate site; that span reads GA. Asparagine 173 serves as a coordination point for Mg(2+).

It belongs to the transketolase family. DXPS subfamily. Homodimer. The cofactor is Mg(2+). Thiamine diphosphate is required as a cofactor.

The enzyme catalyses D-glyceraldehyde 3-phosphate + pyruvate + H(+) = 1-deoxy-D-xylulose 5-phosphate + CO2. It functions in the pathway metabolic intermediate biosynthesis; 1-deoxy-D-xylulose 5-phosphate biosynthesis; 1-deoxy-D-xylulose 5-phosphate from D-glyceraldehyde 3-phosphate and pyruvate: step 1/1. Catalyzes the acyloin condensation reaction between C atoms 2 and 3 of pyruvate and glyceraldehyde 3-phosphate to yield 1-deoxy-D-xylulose-5-phosphate (DXP). The chain is 1-deoxy-D-xylulose-5-phosphate synthase from Dictyoglomus thermophilum (strain ATCC 35947 / DSM 3960 / H-6-12).